We begin with the raw amino-acid sequence, 299 residues long: Coenzyme PQQ synthesis protein B (299 aa).

Belongs to the PqqB family.

It functions in the pathway cofactor biosynthesis; pyrroloquinoline quinone biosynthesis. May be involved in the transport of PQQ or its precursor to the periplasm. The polypeptide is Coenzyme PQQ synthesis protein B (Xanthomonas euvesicatoria pv. vesicatoria (strain 85-10) (Xanthomonas campestris pv. vesicatoria)).